We begin with the raw amino-acid sequence, 387 residues long: Phosphoglycerate kinase (387 aa).

Residues 21-23 (DLN), arginine 36, 59-62 (HLGR), arginine 113, and arginine 146 each bind substrate. Residues lysine 197, glutamate 314, and 340 to 343 (GGDT) contribute to the ATP site.

The protein belongs to the phosphoglycerate kinase family. Monomer.

It is found in the cytoplasm. It carries out the reaction (2R)-3-phosphoglycerate + ATP = (2R)-3-phospho-glyceroyl phosphate + ADP. Its pathway is carbohydrate degradation; glycolysis; pyruvate from D-glyceraldehyde 3-phosphate: step 2/5. The sequence is that of Phosphoglycerate kinase from Yersinia enterocolitica serotype O:8 / biotype 1B (strain NCTC 13174 / 8081).